Consider the following 579-residue polypeptide: Altered inheritance of mitochondria protein 9, mitochondrial (579 aa).

Residues 1–36 (MQSWNSQSFLSSHFTMLRYACKRAVPRLNAASGLRF) constitute a mitochondrion transit peptide.

Belongs to the AIM9 family.

The protein localises to the mitochondrion. The sequence is that of Altered inheritance of mitochondria protein 9, mitochondrial (AIM9) from Yarrowia lipolytica (strain CLIB 122 / E 150) (Yeast).